The chain runs to 92 residues: Probable Fe(2+)-trafficking protein (92 aa).

Belongs to the Fe(2+)-trafficking protein family.

Functionally, could be a mediator in iron transactions between iron acquisition and iron-requiring processes, such as synthesis and/or repair of Fe-S clusters in biosynthetic enzymes. The polypeptide is Probable Fe(2+)-trafficking protein (Xanthomonas campestris pv. campestris (strain 8004)).